Consider the following 691-residue polypeptide: MSNKLNKQISTEISECYLKEKPQQSFKKSNEIKMSNELINKISNEISNCYLKEKPQQAKKETKKKSIRSLPTDLPPLKSITPLKSWIFLQCRQMDANGNPLCCGVSGRYTQPGTQCILWQIDENDPSQLWQISKDGHLVSLLAGNYVMDYNNDGTNLAIANGWNNYTSQIWTYNSSTGQIENSNYPNTCLGIKGAFNEPITPTNGTELVIDQPIDNNNLCFQWDLVPSYPLNTILTSPPQAFPTFPGDQNTAFIEISQYLSNVDDIRSQYTNLSVSLPFFQSQMSAMSYPSYLSHEEFDFVRDQLSTEFNYAQEIINLIGNYESFHNELFADNSARLNQLATLCQLEIGSDINAMGSVIQVFSGMMYSILEALPGVGPILGNVLQTAVNIGVAASDGHSTIQPDPFQVALSNLWDTLSTNYEALLSNVSNMETMLLQDWGMMVTTHGLIETLSGPNSLAWQSSMTGDLISAAVPGYEISLLQILMPSKYQIYRYDLANNGNVGLPDDIPSSCLWTDPNDSNITYFIADNETTKVYPDDSLMSLIWGNGVSEQEFFLSANGWNFCMSLLNDNIGSGAPTISNNTSTALNFKIQFSPTQIYNYDVPTHSSNFTTEFDNTAIENSYYQITIYDNTNSWVASISVRVDIFVMRGADVSVLSSSCADGYYLGTPNCLQGSFAHSFTGSINIPIFEN.

A Ricin B-type lectin domain is found at 47–174; it reads SNCYLKEKPQ…NYTSQIWTYN (128 aa).

Belongs to the cup family.

The chain is Putative calcium up-regulated protein I (cupI) from Dictyostelium discoideum (Social amoeba).